A 603-amino-acid polypeptide reads, in one-letter code: Elongation factor 4 (603 aa).

The 183-residue stretch at 7–189 folds into the tr-type G domain; the sequence is SRIRNFSIIA…AIVQQVPPPA (183 aa). GTP is bound by residues 19 to 24 and 136 to 139; these read DHGKST and NKID.

Belongs to the TRAFAC class translation factor GTPase superfamily. Classic translation factor GTPase family. LepA subfamily.

The protein localises to the cell inner membrane. The catalysed reaction is GTP + H2O = GDP + phosphate + H(+). Functionally, required for accurate and efficient protein synthesis under certain stress conditions. May act as a fidelity factor of the translation reaction, by catalyzing a one-codon backward translocation of tRNAs on improperly translocated ribosomes. Back-translocation proceeds from a post-translocation (POST) complex to a pre-translocation (PRE) complex, thus giving elongation factor G a second chance to translocate the tRNAs correctly. Binds to ribosomes in a GTP-dependent manner. The protein is Elongation factor 4 of Synechocystis sp. (strain ATCC 27184 / PCC 6803 / Kazusa).